Consider the following 308-residue polypeptide: Probable inositol oxygenase (308 aa).

Substrate is bound by residues arginine 49 and 106 to 108; that span reads DDS. Positions 119, 144, and 145 each coordinate Fe cation. Substrate-binding positions include lysine 148 and 165 to 166; that span reads GD. Residues histidine 217, histidine 243, and aspartate 276 each contribute to the Fe cation site. Substrate is bound at residue 243-244; the sequence is HS.

The protein belongs to the myo-inositol oxygenase family. It depends on Fe cation as a cofactor.

Its subcellular location is the cytoplasm. It carries out the reaction myo-inositol + O2 = D-glucuronate + H2O + H(+). The protein operates within polyol metabolism; myo-inositol degradation into D-glucuronate; D-glucuronate from myo-inositol: step 1/1. Functionally, involved in the biosynthesis of UDP-glucuronic acid (UDP-GlcA), providing nucleotide sugars for cell-wall polymers. May be also involved in plant ascorbate biosynthesis. This Oryza sativa subsp. japonica (Rice) protein is Probable inositol oxygenase.